Here is a 115-residue protein sequence, read N- to C-terminus: Large ribosomal subunit protein bL19 (115 aa).

It belongs to the bacterial ribosomal protein bL19 family.

Its function is as follows. This protein is located at the 30S-50S ribosomal subunit interface and may play a role in the structure and function of the aminoacyl-tRNA binding site. The protein is Large ribosomal subunit protein bL19 of Lawsonia intracellularis (strain PHE/MN1-00).